Reading from the N-terminus, the 438-residue chain is Histidinol dehydrogenase (438 aa).

Residues Tyr-129, Gln-193, and Asn-216 each contribute to the NAD(+) site. Substrate is bound by residues Thr-239, Gln-261, and His-264. Zn(2+) is bound by residues Gln-261 and His-264. Residues Glu-330 and His-331 each act as proton acceptor in the active site. Residues His-331, Asp-364, Glu-418, and His-423 each coordinate substrate. Position 364 (Asp-364) interacts with Zn(2+). Zn(2+) is bound at residue His-423.

This sequence belongs to the histidinol dehydrogenase family. The cofactor is Zn(2+).

It carries out the reaction L-histidinol + 2 NAD(+) + H2O = L-histidine + 2 NADH + 3 H(+). It functions in the pathway amino-acid biosynthesis; L-histidine biosynthesis; L-histidine from 5-phospho-alpha-D-ribose 1-diphosphate: step 9/9. Catalyzes the sequential NAD-dependent oxidations of L-histidinol to L-histidinaldehyde and then to L-histidine. The polypeptide is Histidinol dehydrogenase (Thermobifida fusca (strain YX)).